The sequence spans 200 residues: Thymidine kinase (200 aa).

Residues 15–22 (GPMYSGKS) and 88–91 (DEVQ) contribute to the ATP site. The active-site Proton acceptor is E89. C145, C148, C177, and C180 together coordinate Zn(2+).

This sequence belongs to the thymidine kinase family. Homotetramer.

The protein localises to the cytoplasm. It carries out the reaction thymidine + ATP = dTMP + ADP + H(+). In Mycoplasma mobile (strain ATCC 43663 / 163K / NCTC 11711) (Mesomycoplasma mobile), this protein is Thymidine kinase.